Reading from the N-terminus, the 199-residue chain is ATP-dependent Clp protease proteolytic subunit 3 (199 aa).

Ser101 functions as the Nucleophile in the catalytic mechanism. His126 is a catalytic residue.

This sequence belongs to the peptidase S14 family. As to quaternary structure, fourteen ClpP subunits assemble into 2 heptameric rings which stack back to back to give a disk-like structure with a central cavity, resembling the structure of eukaryotic proteasomes.

It localises to the cytoplasm. The enzyme catalyses Hydrolysis of proteins to small peptides in the presence of ATP and magnesium. alpha-casein is the usual test substrate. In the absence of ATP, only oligopeptides shorter than five residues are hydrolyzed (such as succinyl-Leu-Tyr-|-NHMec, and Leu-Tyr-Leu-|-Tyr-Trp, in which cleavage of the -Tyr-|-Leu- and -Tyr-|-Trp bonds also occurs).. Cleaves peptides in various proteins in a process that requires ATP hydrolysis. Has a chymotrypsin-like activity. Plays a major role in the degradation of misfolded proteins. In Synechococcus elongatus (strain ATCC 33912 / PCC 7942 / FACHB-805) (Anacystis nidulans R2), this protein is ATP-dependent Clp protease proteolytic subunit 3.